Reading from the N-terminus, the 229-residue chain is Probable methylthioribulose-1-phosphate dehydratase (229 aa).

Cysteine 97 serves as a coordination point for substrate. Zn(2+) contacts are provided by histidine 115 and histidine 117. The Proton donor/acceptor role is filled by glutamate 139. Residue histidine 195 coordinates Zn(2+).

This sequence belongs to the aldolase class II family. MtnB subfamily. Zn(2+) serves as cofactor.

It localises to the cytoplasm. The enzyme catalyses 5-(methylsulfanyl)-D-ribulose 1-phosphate = 5-methylsulfanyl-2,3-dioxopentyl phosphate + H2O. It functions in the pathway amino-acid biosynthesis; L-methionine biosynthesis via salvage pathway; L-methionine from S-methyl-5-thio-alpha-D-ribose 1-phosphate: step 2/6. Functionally, catalyzes the dehydration of methylthioribulose-1-phosphate (MTRu-1-P) into 2,3-diketo-5-methylthiopentyl-1-phosphate (DK-MTP-1-P). The polypeptide is Probable methylthioribulose-1-phosphate dehydratase (Acyrthosiphon pisum (Pea aphid)).